The chain runs to 289 residues: tRNA pseudouridine synthase B (289 aa).

The Nucleophile role is filled by D38.

It belongs to the pseudouridine synthase TruB family. Type 1 subfamily.

The catalysed reaction is uridine(55) in tRNA = pseudouridine(55) in tRNA. Its function is as follows. Responsible for synthesis of pseudouridine from uracil-55 in the psi GC loop of transfer RNAs. This chain is tRNA pseudouridine synthase B, found in Clostridium novyi (strain NT).